The following is a 336-amino-acid chain: Dihydroorotate dehydrogenase (quinone) (336 aa).

Residues 62 to 66 (AGLDK) and Thr86 each bind FMN. Residue Lys66 coordinates substrate. 111–115 (NRMGF) lines the substrate pocket. Asn139 and Asn172 together coordinate FMN. Residue Asn172 participates in substrate binding. Ser175 (nucleophile) is an active-site residue. Residue Asn177 coordinates substrate. Lys217 and Thr245 together coordinate FMN. Residue 246–247 (NT) participates in substrate binding. FMN is bound by residues Gly268, Gly297, and 318 to 319 (YS).

It belongs to the dihydroorotate dehydrogenase family. Type 2 subfamily. Monomer. The cofactor is FMN.

The protein resides in the cell membrane. It carries out the reaction (S)-dihydroorotate + a quinone = orotate + a quinol. The protein operates within pyrimidine metabolism; UMP biosynthesis via de novo pathway; orotate from (S)-dihydroorotate (quinone route): step 1/1. In terms of biological role, catalyzes the conversion of dihydroorotate to orotate with quinone as electron acceptor. This is Dihydroorotate dehydrogenase (quinone) from Sodalis glossinidius (strain morsitans).